Here is a 438-residue protein sequence, read N- to C-terminus: UDP-N-acetylmuramoylalanine--D-glutamate ligase (438 aa).

112-118 (GSNGKST) lines the ATP pocket.

This sequence belongs to the MurCDEF family.

It is found in the cytoplasm. The catalysed reaction is UDP-N-acetyl-alpha-D-muramoyl-L-alanine + D-glutamate + ATP = UDP-N-acetyl-alpha-D-muramoyl-L-alanyl-D-glutamate + ADP + phosphate + H(+). It functions in the pathway cell wall biogenesis; peptidoglycan biosynthesis. In terms of biological role, cell wall formation. Catalyzes the addition of glutamate to the nucleotide precursor UDP-N-acetylmuramoyl-L-alanine (UMA). The sequence is that of UDP-N-acetylmuramoylalanine--D-glutamate ligase from Yersinia pseudotuberculosis serotype I (strain IP32953).